The primary structure comprises 169 residues: Procalin (169 aa).

A signal peptide spans 1–18 (MKTFIVITFIGILSYAYA). 3 disulfide bridges follow: Cys-21/Cys-125, Cys-54/Cys-168, and Cys-83/Cys-97.

Belongs to the calycin superfamily. Triabin family. Expressed in salivary glands.

Its subcellular location is the secreted. The protein is Procalin of Hospesneotomae protracta (Western bloodsucking conenose).